Consider the following 119-residue polypeptide: FAD-linked sulfhydryl oxidase (119 aa).

Residues 1–97 (MLHWGPKFWR…ISWSEYKNIY (97 aa)) form the ERV/ALR sulfhydryl oxidase domain. An intrachain disulfide couples Cys44 to Cys47.

It belongs to the asfivirus B119L family. In terms of assembly, interacts with A151R. It depends on FAD as a cofactor.

It localises to the host cytoplasm. It is found in the virion. The catalysed reaction is 2 R'C(R)SH + O2 = R'C(R)S-S(R)CR' + H2O2. Its function is as follows. FAD-dependent sulfhydryl oxidase that catalyzes the formation of disulfide bonds in viral proteins produced in the cell cytoplasm. Involved in virion maturation. This chain is FAD-linked sulfhydryl oxidase, found in Ornithodoros (relapsing fever ticks).